We begin with the raw amino-acid sequence, 858 residues long: Large structural phosphoprotein (858 aa).

Residues Asp-603–Lys-629 form a disordered region.

This sequence belongs to the herpesviridae large structural phosphoprotein family. Homotetramer. Interacts with the major capsid protein. 180 tegument protein pU11 tetramers bind to the virion capsid. Post-translationally, phosphorylated at multiple sites.

The protein localises to the virion tegument. This Homo sapiens (Human) protein is Large structural phosphoprotein (U11).